Reading from the N-terminus, the 295-residue chain is Aspartate carbamoyltransferase catalytic subunit (295 aa).

The carbamoyl phosphate site is built by arginine 49 and threonine 50. Lysine 77 contacts L-aspartate. Residues arginine 99, histidine 127, and glutamine 130 each contribute to the carbamoyl phosphate site. Residues arginine 161 and arginine 212 each coordinate L-aspartate. Glycine 251 and proline 252 together coordinate carbamoyl phosphate.

Belongs to the aspartate/ornithine carbamoyltransferase superfamily. ATCase family. As to quaternary structure, heterododecamer (2C3:3R2) of six catalytic PyrB chains organized as two trimers (C3), and six regulatory PyrI chains organized as three dimers (R2).

The catalysed reaction is carbamoyl phosphate + L-aspartate = N-carbamoyl-L-aspartate + phosphate + H(+). The protein operates within pyrimidine metabolism; UMP biosynthesis via de novo pathway; (S)-dihydroorotate from bicarbonate: step 2/3. Its function is as follows. Catalyzes the condensation of carbamoyl phosphate and aspartate to form carbamoyl aspartate and inorganic phosphate, the committed step in the de novo pyrimidine nucleotide biosynthesis pathway. The chain is Aspartate carbamoyltransferase catalytic subunit from Campylobacter jejuni subsp. jejuni serotype O:6 (strain 81116 / NCTC 11828).